Reading from the N-terminus, the 256-residue chain is Imidazole glycerol phosphate synthase subunit HisF (256 aa).

Catalysis depends on residues Asp13 and Asp132.

It belongs to the HisA/HisF family. Heterodimer of HisH and HisF.

The protein resides in the cytoplasm. The catalysed reaction is 5-[(5-phospho-1-deoxy-D-ribulos-1-ylimino)methylamino]-1-(5-phospho-beta-D-ribosyl)imidazole-4-carboxamide + L-glutamine = D-erythro-1-(imidazol-4-yl)glycerol 3-phosphate + 5-amino-1-(5-phospho-beta-D-ribosyl)imidazole-4-carboxamide + L-glutamate + H(+). It functions in the pathway amino-acid biosynthesis; L-histidine biosynthesis; L-histidine from 5-phospho-alpha-D-ribose 1-diphosphate: step 5/9. Functionally, IGPS catalyzes the conversion of PRFAR and glutamine to IGP, AICAR and glutamate. The HisF subunit catalyzes the cyclization activity that produces IGP and AICAR from PRFAR using the ammonia provided by the HisH subunit. The sequence is that of Imidazole glycerol phosphate synthase subunit HisF from Leptospira borgpetersenii serovar Hardjo-bovis (strain JB197).